The following is a 711-amino-acid chain: MGAYLTLIYGVIVIAALVIIGLIKFIFAQDKGNEKMQQISDAIKEGAMAFLNRQYKTIASLALIVAVIIVVANYYGHLSEGSSQALSFALHVGFAFITGAFCSALSGYIGMYMAVNSNIRAAAGARSGLNRALQIALKGGAVTGLAVTALSLFGVATLFLAYGGLSGQDELIKEAPSLIVGFGFGASFVALFAQLGGGIYTKAADVGADLVGKVEAGIPEDDPRNPAVIADLVGDNVGDCAGRGADLFESTAAENIGAMILGVGLYPIFGWKGILFPLVARAIGIIASIIGIFFVNTKDESKDPMIALNKGYFVTTVVNLIALFFAVKVMLSGHLPDGRPVNYLLLYGAVVTGVILSYIFVFLTDYYTSVNKRPVQEIAKASTTGAATNIITGTSVGMESTALPVIFISAAIYIAYKLGEMAIPHIGTAGLYGTAIATMGMLSTTAYILAMDTFGPITDNAGGITEMSGAPEEIRRVTDRLDACGNTTKALTKGYAIGSAALATFLLFSAYLDEVKKILGKPIDSWFPVDIGKPEVFIGAFIGAMIVYLFSSTAIRAVGKAAQYVILEVRRQFREIPGIMEGTAKPDYARAVDIVTKGALKEMVIPGLIVVVTPILVGVILGKEAAAAFLMIGTISGVILALYLNNGGGAWDNAKKFIELGNYGGKGSDAHKASVVGDTVGDPFKDTAGPSLHVLIKLISTITLVFVALFR.

A run of 5 helical transmembrane segments spans residues 7-27, 58-78, 85-105, 145-165, and 179-199; these read LIYGVIVIAALVIIGLIKFIF, IASLALIVAVIIVVANYYGHL, ALSFALHVGFAFITGAFCSAL, LAVTALSLFGVATLFLAYGGL, and IVGFGFGASFVALFAQLGGGI. Lys202 contacts substrate. Residues Asp205, Asp209, and Asp235 each contribute to the Mg(2+) site. 6 consecutive transmembrane segments (helical) span residues 251–271, 274–294, 311–331, 343–363, 403–423, and 431–451; these read TAAENIGAMILGVGLYPIFGW, ILFPLVARAIGIIASIIGIFF, GYFVTTVVNLIALFFAVKVML, YLLLYGAVVTGVILSYIFVFL, LPVIFISAAIYIAYKLGEMAI, and LYGTAIATMGMLSTTAYILAM. Asp459 contacts Mg(2+). 4 helical membrane passes run 495 to 515, 535 to 555, 602 to 622, and 624 to 644; these read YAIGSAALATFLLFSAYLDEV, EVFIGAFIGAMIVYLFSSTAI, EMVIPGLIVVVTPILVGVILG, and EAAAAFLMIGTISGVILALYL. Residues Asp652, Asp678, and Asp682 each coordinate Ca(2+). Lys685 contacts substrate. The helical transmembrane segment at 690 to 710 threads the bilayer; that stretch reads PSLHVLIKLISTITLVFVALF.

This sequence belongs to the H(+)-translocating pyrophosphatase (TC 3.A.10) family. K(+)-insensitive subfamily. In terms of assembly, homodimer. Mg(2+) is required as a cofactor.

It localises to the cell membrane. It carries out the reaction diphosphate + H2O + H(+)(in) = 2 phosphate + 2 H(+)(out). Proton pump that utilizes the energy of pyrophosphate hydrolysis as the driving force for proton movement across the membrane. Generates a proton motive force. The protein is K(+)-insensitive pyrophosphate-energized proton pump of Caldanaerobacter subterraneus subsp. tengcongensis (strain DSM 15242 / JCM 11007 / NBRC 100824 / MB4) (Thermoanaerobacter tengcongensis).